Consider the following 466-residue polypeptide: Vimentin (466 aa).

Composition is skewed to low complexity over residues 1–13 (MSTR…SYRR) and 20–33 (TSSR…YVTT). The tract at residues 1–33 (MSTRSVSSSSYRRMFGGSGTSSRPSSNRSYVTT) is disordered. Residue Ser-2 is modified to N-acetylserine. A head region spans residues 2-95 (STRSVSSSSY…FSLADAINTE (94 aa)). Ser-5 carries the phosphoserine modification. Ser-7 is subject to Phosphoserine; by PKA and PKC; alternate. An O-linked (GlcNAc) serine; alternate glycan is attached at Ser-7. At Ser-8 the chain carries Phosphoserine. 2 positions are modified to phosphoserine; by PKC: Ser-9 and Ser-10. Thr-20 carries the phosphothreonine modification. A phosphoserine mark is found at Ser-25 and Ser-26. Thr-33 is a glycosylation site (O-linked (GlcNAc) threonine). Ser-34 is a glycosylation site (O-linked (GlcNAc) serine; alternate). Phosphoserine; by PKC; alternate is present on Ser-34. The residue at position 39 (Ser-39) is a Phosphoserine; by CaMK2, PKA, PKC and ROCK2. Residue Ser-42 is modified to Phosphoserine; by PKC. Ser-47 bears the Phosphoserine; by PKA mark. A phosphoserine mark is found at Ser-49 and Ser-51. Tyr-53 carries the post-translational modification Phosphotyrosine. Phosphoserine occurs at positions 55 and 56. A Phosphotyrosine modification is found at Tyr-61. Ser-66 carries the post-translational modification Phosphoserine; by PKA and PKC. Ser-72 carries the post-translational modification Phosphoserine; by AURKB and ROCK2. Phosphoserine occurs at positions 73, 83, and 87. Positions 96-131 (FKNTRTNEKVELQELNDRFANYIDKVRFLEQQNKIL) are coil 1A. The stretch at 96–131 (FKNTRTNEKVELQELNDRFANYIDKVRFLEQQNKIL) forms a coiled coil. Residues 103 to 411 (EKVELQELND…KLLEGEESRI (309 aa)) form the IF rod domain. Residue Lys-104 forms a Glycyl lysine isopeptide (Lys-Gly) (interchain with G-Cter in SUMO2) linkage. Tyr-117 carries the post-translational modification Phosphotyrosine. An N6-acetyllysine; alternate mark is found at Lys-120, Lys-129, and Lys-139. N6-succinyllysine; alternate occurs at positions 120 and 129. Glycyl lysine isopeptide (Lys-Gly) (interchain with G-Cter in SUMO2); alternate cross-links involve residues Lys-120, Lys-129, and Lys-139. The interval 132–153 (LAELEQLKGQGKSRLGDLYEEE) is linker 1. Phosphoserine is present on Ser-144. A coiled-coil region spans residues 154 to 245 (MRELRRQVDQ…KLHDEEIQEL (92 aa)). Residues 154–245 (MRELRRQVDQ…KLHDEEIQEL (92 aa)) are coil 1B. The residue at position 168 (Lys-168) is an N6-acetyllysine. Residue Lys-188 is modified to N6-acetyllysine; alternate. Lys-188 is modified (N6-succinyllysine; alternate). Phosphoserine is present on Ser-214. Lys-223 is modified (N6-acetyllysine; alternate). Lys-223 participates in a covalent cross-link: Glycyl lysine isopeptide (Lys-Gly) (interchain with G-Cter in SUMO2); alternate. Residue Ser-226 is modified to Phosphoserine. Lys-235 carries the post-translational modification N6-acetyllysine. Residues 246-268 (QAQIQEQHVQIDVDVSKPDLTAA) are linker 12. A Glycyl lysine isopeptide (Lys-Gly) (interchain with G-Cter in SUMO2) cross-link involves residue Lys-262. Positions 269–407 (LRDVRQQYES…ATYRKLLEGE (139 aa)) are coil 2. Lys-294 is subject to N6-acetyllysine; alternate. Lys-294 carries the N6-succinyllysine; alternate modification. Lys-294 is covalently cross-linked (Glycyl lysine isopeptide (Lys-Gly) (interchain with G-Cter in SUMO2); alternate). Phosphoserine is present on Ser-299. Residues 303–407 (NRNNDALRQA…ATYRKLLEGE (105 aa)) are a coiled coil. A Glycyl lysine isopeptide (Lys-Gly) (interchain with G-Cter in SUMO2) cross-link involves residue Lys-313. The residue at position 325 (Ser-325) is a Phosphoserine. Positions 326–329 (LTCE) match the [IL]-x-C-x-x-[DE] motif motif. The residue at position 373 (Lys-373) is an N6-acetyllysine; alternate. A Glycyl lysine isopeptide (Lys-Gly) (interchain with G-Cter in SUMO2); alternate cross-link involves residue Lys-373. The segment at 408–466 (ESRISLPLPNFSSLNLRETNLESLPLVDTHSKRTLLIKTVETRDGQVINETSQHHDDLE) is tail. Phosphoserine occurs at positions 409, 412, 419, and 420. Residue Thr-426 is modified to Phosphothreonine. Phosphoserine is present on Ser-430. Thr-436 is modified (phosphothreonine). Position 438 is a phosphoserine (Ser-438). Residue Lys-439 forms a Glycyl lysine isopeptide (Lys-Gly) (interchain with G-Cter in SUMO2) linkage. Lys-445 is subject to N6-acetyllysine; alternate. An N6-succinyllysine; alternate modification is found at Lys-445. Lys-445 is covalently cross-linked (Glycyl lysine isopeptide (Lys-Gly) (interchain with G-Cter in SUMO2); alternate). Residue Lys-445 forms a Glycyl lysine isopeptide (Lys-Gly) (interchain with G-Cter in SUMO1); alternate linkage. 2 positions are modified to phosphothreonine: Thr-446 and Thr-458. Ser-459 carries the phosphoserine modification.

It belongs to the intermediate filament family. In terms of assembly, homomer assembled from elementary dimers. Identified in complexes that contain VIM, EZR, AHNAK, BFSP1, BFSP2, ANK2, PLEC, PRX and spectrin. Interacts with BCAS3. Interacts with LGSN. Interacts with SYNM. Interacts (via rod region) with PLEC (via CH 1 domain). Interacts with STK33. Interacts with LARP6. Interacts with RAB8B. Interacts with TOR1A; the interaction associates TOR1A with the cytoskeleton. Interacts with TOR1AIP1. Interacts with TOR1AIP1. Interacts with DIAPH1. Interacts with EPPK1; interaction is dependent of higher-order structure of intermediate filament. Interacts with the non-receptor tyrosine kinase SRMS; the interaction leads to phosphorylation of VIM. Interacts with NOD2. Interacts (via head region) with CORO1C. Interacts with HDGF. Interacts with PRKCE (via phorbol-ester/DAG-type 2 domain). Interacts with BFSP2. Interacts with PPL. Interacts with PKP1 and PKP2. Interacts with SCRIB (via PDZ domains); the interaction protects SCRIB from proteasomal degradation and facilitates SCRIB localization to intermediate filaments, the interaction is reduced by cell contact inhibition. One of the most prominent phosphoproteins in various cells of mesenchymal origin. Phosphorylation is enhanced during cell division, at which time vimentin filaments are significantly reorganized. Phosphorylation by PKN1 inhibits the formation of filaments. Filament disassembly during mitosis is promoted by phosphorylation at Ser-55 as well as by nestin. Phosphorylated at Ser-56 by CDK5 during neutrophil secretion in the cytoplasm. Phosphorylated by STK33. Phosphorylated on tyrosine residues by SRMS. Post-translationally, S-nitrosylation is induced by interferon-gamma and oxidatively-modified low-densitity lipoprotein (LDL(ox)) possibly implicating the iNOS-S100A8/9 transnitrosylase complex.

Its subcellular location is the cytoplasm. It localises to the cytoskeleton. It is found in the nucleus matrix. The protein localises to the cell membrane. Vimentins are class-III intermediate filaments found in various non-epithelial cells, especially mesenchymal cells. Vimentin is attached to the nucleus, endoplasmic reticulum, and mitochondria, either laterally or terminally. Plays a role in cell directional movement, orientation, cell sheet organization and Golgi complex polarization at the cell migration front. Protects SCRIB from proteasomal degradation and facilitates its localization to intermediate filaments in a cell contact-mediated manner. In terms of biological role, involved with LARP6 in the stabilization of type I collagen mRNAs for CO1A1 and CO1A2. This is Vimentin from Rattus norvegicus (Rat).